Here is a 590-residue protein sequence, read N- to C-terminus: EGF-like and EMI domain-containing protein 1 (590 aa).

The signal sequence occupies residues 1–23; it reads MTSPLCFWCFCVWAAANWPPGSA. Residues 44–104 enclose the EMI domain; the sequence is LSRPCAQAFI…RCCPGWIQWD (61 aa). Residues 105–145 form the EGF-like 1 domain; the sequence is DEPGCFSSLSSLGTHFSGRECSYQDTRQCLCSQGFHGPHCQ. 11 disulfides stabilise this stretch: cysteine 109-cysteine 125, cysteine 135-cysteine 144, cysteine 168-cysteine 179, cysteine 175-cysteine 188, cysteine 190-cysteine 203, cysteine 209-cysteine 219, cysteine 215-cysteine 228, cysteine 230-cysteine 243, cysteine 249-cysteine 260, cysteine 256-cysteine 269, and cysteine 271-cysteine 284. Residues 164–204 enclose the EGF-like 2; calcium-binding domain; that stretch reads NVDECAVVNGGCQQRCINTLGTFHCECDTGYRRHADERTCI. The EGF-like 3 domain occupies 205 to 244; sequence KTDPCAGANGCAHLCQTENGMARCACHAGYQLSEDKKACE. The region spanning 245–285 is the EGF-like 4; calcium-binding domain; the sequence is DINECAGELAPCAHHCVNSKGSFTCTCHPGFELGADRKHCY. A disordered region spans residues 393-424; it reads RLAQNPPQPFPYLDPSLTASYEDEDNDDADSE. Positions 413–424 are enriched in acidic residues; that stretch reads YEDEDNDDADSE. Positions 445 to 481 constitute an EGF-like 5 domain; the sequence is FGLDCSLSCEDCMNGGRCQEGKSGCLCPAEWTGLICN. Intrachain disulfides connect cysteine 449-cysteine 462, cysteine 456-cysteine 469, and cysteine 471-cysteine 480.

This chain is EGF-like and EMI domain-containing protein 1 (Egfem1), found in Mus musculus (Mouse).